The primary structure comprises 163 residues: Outer membrane protein assembly factor BamE (163 aa).

The signal sequence occupies residues methionine 1–alanine 22. The N-palmitoyl cysteine moiety is linked to residue cysteine 23. Cysteine 23 carries S-diacylglycerol cysteine lipidation. The disordered stretch occupies residues glutamate 122–lysine 163. Over residues arginine 142 to glutamine 153 the composition is skewed to basic and acidic residues.

It belongs to the BamE family. As to quaternary structure, part of the Bam complex.

It localises to the cell outer membrane. Functionally, part of the outer membrane protein assembly complex, which is involved in assembly and insertion of beta-barrel proteins into the outer membrane. The protein is Outer membrane protein assembly factor BamE of Shewanella oneidensis (strain ATCC 700550 / JCM 31522 / CIP 106686 / LMG 19005 / NCIMB 14063 / MR-1).